A 401-amino-acid polypeptide reads, in one-letter code: Inactive (1R,4R,5S)-(-)-guaia-6,10(14)-diene synthase (401 aa).

The tract at residues 1–20 (MVKFDSGSESEMTNGDELHI) is disordered. Residues D134 and E139 each coordinate Mg(2+). The DDXXD motif signature appears at 134-138 (DDQFD). R242 is a binding site for substrate. S292 is a binding site for Mg(2+). A substrate-binding site is contributed by K295. Mg(2+) is bound at residue D296. 375–376 (RY) contributes to the substrate binding site.

It belongs to the terpene synthase family. It depends on Mg(2+) as a cofactor.

This Gibberella fujikuroi (strain CBS 195.34 / IMI 58289 / NRRL A-6831) (Bakanae and foot rot disease fungus) protein is Inactive (1R,4R,5S)-(-)-guaia-6,10(14)-diene synthase.